We begin with the raw amino-acid sequence, 256 residues long: MADPRRDPAAESKDRPSTERVAAYTADAVRAAEAPLLAEGRPLMRTAARALADIAAAEVRTTPGAVLVLAGAGDNGGDALFAAADLASSAERVDVVLVRDRVHREALDAAVAAGARVVSVSDASAGVADYALVLDGILGIGRLADRRLRGSARALVERLLALAHRPRVLAVDVPSGLDPDDGTADAVILPADVTVTFGALKAGLVRGRGPELSGRVHLVDLGLEPYLRRAHPAVTAAIDVVRETPRAAETDRAQRA.

Positions 1 to 18 (MADPRRDPAAESKDRPST) are enriched in basic and acidic residues. The disordered stretch occupies residues 1-21 (MADPRRDPAAESKDRPSTERV). The region spanning 23–229 (AYTADAVRAA…DLGLEPYLRR (207 aa)) is the YjeF N-terminal domain. Residue 74–78 (DNGGD) participates in (6S)-NADPHX binding. K(+) contacts are provided by Asn-75 and Asp-135. Residues 139-147 (GIGRLADRR) and Asp-172 contribute to the (6S)-NADPHX site. Position 175 (Ser-175) interacts with K(+).

This sequence belongs to the NnrE/AIBP family. Requires K(+) as cofactor.

The catalysed reaction is (6R)-NADHX = (6S)-NADHX. It carries out the reaction (6R)-NADPHX = (6S)-NADPHX. Catalyzes the epimerization of the S- and R-forms of NAD(P)HX, a damaged form of NAD(P)H that is a result of enzymatic or heat-dependent hydration. This is a prerequisite for the S-specific NAD(P)H-hydrate dehydratase to allow the repair of both epimers of NAD(P)HX. In Microbacterium testaceum (strain StLB037), this protein is NAD(P)H-hydrate epimerase.